The primary structure comprises 334 residues: Succinate receptor 1 (334 aa).

Residues 5–31 (MAWNATCKNWLAAEAALEKYYLSIFYG) lie on the Extracellular side of the membrane. A glycan (N-linked (GlcNAc...) asparagine) is linked at N8. The helical transmembrane segment at 32–52 (IEFVVGVLGNTIVVYGYIFSL) threads the bilayer. Topologically, residues 53–59 (KNWNSSN) are cytoplasmic. A helical transmembrane segment spans residues 60–80 (IYLFNLSVSDLAFLCTLPMLI). Over 81–103 (RSYANGNWIYGDVLCISNRYVLH) the chain is Extracellular. C95 and C172 are disulfide-bonded. A helical transmembrane segment spans residues 104 to 124 (ANLYTSILFLTFISIDRYLII). Residues 125-137 (KYPFREHLLQKKE) are Cytoplasmic-facing. The chain crosses the membrane as a helical span at residues 138–158 (FAILISLAIWVLVTLELLPIL). Residues 159 to 185 (PLINPVITDNGTTCNDFASSGDPNYNL) lie on the Extracellular side of the membrane. N168 carries N-linked (GlcNAc...) asparagine glycosylation. A helical membrane pass occupies residues 186-206 (IYSMCLTLLGFLIPLFVMCFF). Residues 207 to 230 (YYKIALFLKQRNRQVATALPLEKP) lie on the Cytoplasmic side of the membrane. A helical transmembrane segment spans residues 231–251 (LNLVIMAVVIFSVLFTPYHVM). At 252 to 281 (RNVRIASRLGSWKQYQCTQVVINSFYIVTR) the chain is on the extracellular side. A helical transmembrane segment spans residues 282–302 (PLAFLNSVINPVFYFLLGDHF). Residues 303 to 334 (RDMLMNQLRHNFKSLTSFSRWAHELLLSFREK) are Cytoplasmic-facing.

Belongs to the G-protein coupled receptor 1 family. As to expression, expressed specifically in kidney. Highly expressed in immature dendritic cells, expression rapidly downregulates after maturation. Also expressed in macrophages.

Its subcellular location is the cell membrane. Functionally, g protein-coupled receptor for succinate able to mediate signaling through Gq/GNAQ or Gi/GNAI second messengers depending on the cell type and the processes regulated. Succinate-SUCNR1 signaling serves as a link between metabolic stress, inflammation and energy homeostasis. In macrophages, plays a range of immune-regulatory roles. During inflammation, succinate-SUCNR1 signaling may act as an anti-inflammatory mediator or boost inflammation depending on the inflammatory status of cells. Hyperpolarizes M2 macrophages versus M1 phenotype through Gq signaling by regulating the transcription of genes involved in immune function. In activated M1 macrophages, plays a pro-inflammatory role in response to LPS. Expressed in dendritic cells, where it is involved in the sensing of immunological danger and enhances immunity. Mediates succinate triggered intracelleular calcium mobilization, induces migratory responses and acts in synergy with Toll-like receptor ligands for the production of proinflammatory cytokines as well as an enhancement of antigen-specific activation of helper T cells. In the small intestine, mediates the activation of tuft cells by dietary succinate and triggers type 2 immunity. In adipocytes, plays an important role in the control of energy metabolism. In response to succinate, controls leptin expression in an AMPK-JNK-CEBPA-dependent as well as circadian clock-regulated manner. In muscle tissue, is expressed in non-muscle cells and coordinates muscle remodeling in response to the succinate produced during exercise training in a paracrine manner. In retina, acts as a mediator of vessel growth during retinal development. In response to succinate, regulates the production of angiogenic factors, including VEGF, by retinal ganglion neurons. This chain is Succinate receptor 1, found in Homo sapiens (Human).